A 105-amino-acid polypeptide reads, in one-letter code: Large ribosomal subunit protein bL21 (105 aa).

The protein belongs to the bacterial ribosomal protein bL21 family. As to quaternary structure, part of the 50S ribosomal subunit. Contacts protein L20.

Its function is as follows. This protein binds to 23S rRNA in the presence of protein L20. The sequence is that of Large ribosomal subunit protein bL21 from Methylobacterium sp. (strain 4-46).